The primary structure comprises 286 residues: Protease HtpX homolog (286 aa).

Transmembrane regions (helical) follow at residues 7–27 (TFML…MIGG) and 29–49 (SGMM…YWFS). His-131 is a binding site for Zn(2+). The active site involves Glu-132. His-135 serves as a coordination point for Zn(2+). A run of 2 helical transmembrane segments spans residues 146-166 (ISAT…FFGG) and 177-197 (IAGI…QMAI). Glu-202 lines the Zn(2+) pocket.

This sequence belongs to the peptidase M48B family. Requires Zn(2+) as cofactor.

Its subcellular location is the cell inner membrane. This is Protease HtpX homolog from Ralstonia pickettii (strain 12J).